Consider the following 1361-residue polypeptide: Zinc finger protein GLI4 (1361 aa).

The disordered stretch occupies residues 185 to 270 (SSFGHTPLLH…PQPPDHLTDL (86 aa)). 2 stretches are compositionally biased toward polar residues: residues 198-208 (TFASRQQGALT) and 227-241 (NKVS…TVNQ). C2H2-type zinc fingers lie at residues 289-314 (TNCH…NNDH), 322-349 (FVCR…MRRH), 355-379 (HKCT…LRSH), 385-410 (YVCD…NRTH), and 416-441 (YICK…KTVH). Disordered stretches follow at residues 434–527 (RKHV…TNNI), 556–584 (STVS…GTAE), 647–720 (NERR…LPNL), 787–832 (NAGL…SMNS), 906–946 (QNRE…APGA), and 1134–1230 (DGLH…PKDN). Basic and acidic residues predominate over residues 475 to 502 (SGREHSDSVSRDQEHCLQTRTIKTEDNM). The segment covering 506 to 522 (SSPGGQSSCSSEPSPYG) has biased composition (low complexity). Residues 573–584 (QRIHSAETGTAE) show a composition bias toward basic and acidic residues. The segment covering 653–670 (TSSTLSSAYTSRRSSGIS) has biased composition (low complexity). 2 stretches are compositionally biased toward polar residues: residues 672 to 695 (YFSS…SSAD) and 710 to 720 (EASQHSGLPNL). Over residues 805–821 (RASDPVRRTAGIDDKPL) the composition is skewed to basic and acidic residues. 2 stretches are compositionally biased toward polar residues: residues 913-939 (QNLQ…NTPE) and 1142-1164 (YTVQ…SGQA). Residues 1172-1183 (PRPPAAPHPPNR) show a composition bias toward pro residues.

This sequence belongs to the GLI C2H2-type zinc-finger protein family.

Its subcellular location is the nucleus. Has an essential role in the early embryonic patterning of mesoderm and neuroectoderm. The sequence is that of Zinc finger protein GLI4 (gli4) from Xenopus laevis (African clawed frog).